Here is a 37-residue protein sequence, read N- to C-terminus: Esculentin-2JDa (37 aa).

A disulfide bridge links cysteine 31 with cysteine 37.

In terms of tissue distribution, expressed by the skin glands.

The protein localises to the secreted. Functionally, has antibacterial activity against E.coli and S.aureus strains. This chain is Esculentin-2JDa, found in Odorrana jingdongensis (Jingdong frog).